We begin with the raw amino-acid sequence, 890 residues long: Leucine-rich repeat receptor-like tyrosine-protein kinase PXC3 (890 aa).

The first 23 residues, 1 to 23, serve as a signal peptide directing secretion; that stretch reads MTFWCMSILLIVGFLSKSELCEA. Topologically, residues 24–534 are extracellular; sequence QLSDEATLVA…LRYNHRVSYR (511 aa). 4 N-linked (GlcNAc...) asparagine glycosylation sites follow: Asn46, Asn61, Asn78, and Asn108. LRR repeat units lie at residues 67–85, 86–108, 110–132, 133–157, 159–181, 182–205, 206–229, 231–254, 256–276, 278–300, 301–325, 326–349, 350–373, 375–397, 399–421, 422–446, 447–469, and 471–492; these read MLDLSGLQLRGNVTLISDL, RSLKHLDLSGNNFNGRIPTSFGN, SELEFLDLSLNRFVGAIPVEFGK, LRGLRAFNISNNLLVGEIPDELKVL, RLEEFQVSGNGLNGSIPHWVGNL, SSLRVFTAYENDLVGEIPNGLGLV, SELELLNLHSNQLEGKIPKGIFEK, KLKVLVLTQNRLTGELPEAVGICS, LSSIRIGNNELVGVIPRTIGN, SGLTYFEADKNNLSGEIVAEFSK, CSNLTLLNLAANGFAGTIPTELGQL, INLQELILSGNSLFGEIPKSFLGS, GNLNKLDLSNNRLNGTIPKELCSM, RLQYLLLDQNSIRGDIPHEIGNC, KLLQLQLGRNYLTGTIPPEIGRM, RNLQIALNLSFNHLHGSLPPELGKL, DKLVSLDVSNNLLTGSIPPLLKG, and MSLIEVNFSNNLLNGPVPVFVP. Residues Asn140, Asn171, and Asn180 are each glycosylated (N-linked (GlcNAc...) asparagine). Asn276, Asn289, and Asn303 each carry an N-linked (GlcNAc...) asparagine glycan. An N-linked (GlcNAc...) asparagine glycan is attached at Asn363. Asn429 is a glycosylation site (N-linked (GlcNAc...) asparagine). N-linked (GlcNAc...) asparagine glycosylation is found at Asn477 and Asn498. The chain crosses the membrane as a helical span at residues 535 to 555; that stretch reads IVLAVIGSGVAVFVSVTVVVL. Residues 556 to 890 lie on the Cytoplasmic side of the membrane; it reads LFMMREKQEK…EMLQEVKQIK (335 aa). Positions 608–886 constitute a Protein kinase domain; sequence MKESNKLSTG…KKVVEMLQEV (279 aa). ATP-binding positions include 614–622 and Lys636; that span reads LSTGTFSSV. Asp735 functions as the Proton acceptor in the catalytic mechanism.

This sequence belongs to the protein kinase superfamily. Tyr protein kinase family. Expressed in the vascular strands of cotyledons, the shoot apex, hypocotyls, roots, leaves, stems and flowers.

It localises to the cell membrane. The catalysed reaction is L-tyrosyl-[protein] + ATP = O-phospho-L-tyrosyl-[protein] + ADP + H(+). Its function is as follows. Leucine-rich repeat receptor-like protein kinase that may play a role in vascular tissues development. In Arabidopsis thaliana (Mouse-ear cress), this protein is Leucine-rich repeat receptor-like tyrosine-protein kinase PXC3.